Here is a 1755-residue protein sequence, read N- to C-terminus: Transposon Ty1-LR2 Gag-Pol polyprotein (1755 aa).

Composition is skewed to polar residues over residues methionine 1–serine 23, threonine 48–serine 60, and glutamine 127–phenylalanine 152. 3 disordered regions span residues methionine 1–glutamine 93, proline 126–methionine 174, and glycine 352–threonine 421. Residues threonine 153–threonine 165 show a composition bias toward low complexity. The tract at residues asparagine 299 to histidine 401 is RNA-binding. Residues asparagine 402–serine 418 are compositionally biased toward low complexity. Serine 416 is modified (phosphoserine). Aspartate 461 serves as the catalytic For protease activity; shared with dimeric partner. The segment at asparagine 583–cysteine 640 is integrase-type zinc finger-like. Residues asparagine 660–proline 835 enclose the Integrase catalytic domain. Aspartate 671 and aspartate 736 together coordinate Mg(2+). 3 disordered regions span residues serine 956–lysine 1087, arginine 1092–proline 1111, and aspartate 1130–threonine 1187. Low complexity predominate over residues serine 960 to threonine 969. Over residues serine 1005–threonine 1015 the composition is skewed to polar residues. Positions glutamate 1038–serine 1053 are enriched in basic and acidic residues. Polar residues-rich tracts occupy residues tyrosine 1054 to aspartate 1082 and proline 1101 to proline 1111. The Bipartite nuclear localization signal motif lies at lysine 1178–arginine 1212. The Reverse transcriptase Ty1/copia-type domain maps to asparagine 1338 to glutamine 1476. Aspartate 1346, aspartate 1427, aspartate 1428, aspartate 1610, glutamate 1652, and aspartate 1685 together coordinate Mg(2+). The 143-residue stretch at aspartate 1610–lysine 1752 folds into the RNase H Ty1/copia-type domain.

The capsid protein forms a homotrimer, from which the VLPs are assembled. The protease is a homodimer, whose active site consists of two apposed aspartic acid residues. In terms of processing, initially, virus-like particles (VLPs) are composed of the structural unprocessed proteins Gag and Gag-Pol, and also contain the host initiator methionine tRNA (tRNA(i)-Met) which serves as a primer for minus-strand DNA synthesis, and a dimer of genomic Ty RNA. Processing of the polyproteins occurs within the particle and proceeds by an ordered pathway, called maturation. First, the protease (PR) is released by autocatalytic cleavage of the Gag-Pol polyprotein yielding capsid protein p45 and a Pol-p154 precursor protein. This cleavage is a prerequisite for subsequent processing of Pol-p154 at the remaining sites to release the mature structural and catalytic proteins. Maturation takes place prior to the RT reaction and is required to produce transposition-competent VLPs.

It is found in the cytoplasm. Its subcellular location is the nucleus. The enzyme catalyses DNA(n) + a 2'-deoxyribonucleoside 5'-triphosphate = DNA(n+1) + diphosphate. The catalysed reaction is Endonucleolytic cleavage to 5'-phosphomonoester.. Its function is as follows. Capsid protein (CA) is the structural component of the virus-like particle (VLP), forming the shell that encapsulates the retrotransposons dimeric RNA genome. The particles are assembled from trimer-clustered units and there are holes in the capsid shells that allow for the diffusion of macromolecules. CA also has nucleocapsid-like chaperone activity, promoting primer tRNA(i)-Met annealing to the multipartite primer-binding site (PBS), dimerization of Ty1 RNA and initiation of reverse transcription. The aspartyl protease (PR) mediates the proteolytic cleavages of the Gag and Gag-Pol polyproteins after assembly of the VLP. Functionally, reverse transcriptase/ribonuclease H (RT) is a multifunctional enzyme that catalyzes the conversion of the retro-elements RNA genome into dsDNA within the VLP. The enzyme displays a DNA polymerase activity that can copy either DNA or RNA templates, and a ribonuclease H (RNase H) activity that cleaves the RNA strand of RNA-DNA heteroduplexes during plus-strand synthesis and hydrolyzes RNA primers. The conversion leads to a linear dsDNA copy of the retrotransposon that includes long terminal repeats (LTRs) at both ends. In terms of biological role, integrase (IN) targets the VLP to the nucleus, where a subparticle preintegration complex (PIC) containing at least integrase and the newly synthesized dsDNA copy of the retrotransposon must transit the nuclear membrane. Once in the nucleus, integrase performs the integration of the dsDNA into the host genome. The chain is Transposon Ty1-LR2 Gag-Pol polyprotein (TY1B-LR2) from Saccharomyces cerevisiae (strain ATCC 204508 / S288c) (Baker's yeast).